Consider the following 132-residue polypeptide: Small ribosomal subunit protein uS8 (132 aa).

The protein belongs to the universal ribosomal protein uS8 family. Part of the 30S ribosomal subunit. Contacts proteins S5 and S12.

In terms of biological role, one of the primary rRNA binding proteins, it binds directly to 16S rRNA central domain where it helps coordinate assembly of the platform of the 30S subunit. The polypeptide is Small ribosomal subunit protein uS8 (Corynebacterium efficiens (strain DSM 44549 / YS-314 / AJ 12310 / JCM 11189 / NBRC 100395)).